A 231-amino-acid polypeptide reads, in one-letter code: NADH-ubiquinone oxidoreductase chain 4 (231 aa).

6 consecutive transmembrane segments (helical) span residues 1–21 (PIAGSMVLAAILLKLGGYGII), 34–54 (MFIPFIVLALWGAILANLTCL), 63–85 (IAYSSISHMGLVVATIIIQTPWG), 89–111 (AMALMIAHGFTSSALFCLANTTY), 128–148 (ILPMTTTWWLLANLMNIAMPP), and 169–189 (TIIMLGLSMLITASYSLHMFL).

The protein belongs to the complex I subunit 4 family.

It localises to the mitochondrion membrane. It catalyses the reaction a ubiquinone + NADH + 5 H(+)(in) = a ubiquinol + NAD(+) + 4 H(+)(out). In terms of biological role, core subunit of the mitochondrial membrane respiratory chain NADH dehydrogenase (Complex I) that is believed to belong to the minimal assembly required for catalysis. Complex I functions in the transfer of electrons from NADH to the respiratory chain. The immediate electron acceptor for the enzyme is believed to be ubiquinone. The sequence is that of NADH-ubiquinone oxidoreductase chain 4 (MT-ND4) from Lachesis muta muta (Bushmaster).